A 333-amino-acid chain; its full sequence is Homeobox protein HMX1 (333 aa).

Disordered stretches follow at residues 1–74 (MAQD…STSA), 86–109 (GTEG…APRC), and 139–204 (CASP…KKKT). Polar residues predominate over residues 17–30 (DYTQGNTDRSTAAA). Gly residues predominate over residues 87-105 (TEGGGGTRRAAAGGGGGRG). A compositionally biased stretch (basic and acidic residues) spans 144–158 (TSDRDSPELPEDTER). The segment covering 159–176 (AGGGGRAAARGPAGGRQS) has biased composition (gly residues). The segment covering 181–192 (EEEEERGEEAGE) has biased composition (acidic residues). The homeobox DNA-binding region spans 201 to 260 (KKKTRTVFSRSQVFQLESTFDVKRYLSSSERAGLAASLHLTETQVKIWFQNRRNKWKRQL). The HMX family specific domain 1 signature appears at 261 to 271 (AADLEAANLSH).

This sequence belongs to the HMX homeobox family.

The protein localises to the nucleus. Functionally, DNA-binding protein that binds to the 5'-CAAG-3' core sequence. May function as a transcriptional repressor. Seems to act as a transcriptional antagonist of NKX2-5. May play an important role in the development of craniofacial structures such as the eye and ear. This Gallus gallus (Chicken) protein is Homeobox protein HMX1 (HMX1).